The primary structure comprises 461 residues: Ribonuclease inhibitor (461 aa).

N-acetylserine is present on S2. The tract at residues S2–Q11 is 2 X 5 AA tandem repeats of S-L-D-I-Q. 15 LRR repeats span residues W20–I48, S49–V76, L77–L105, S106–L133, C134–L162, A163–L190, C191–L219, C220–L247, C248–L276, C277–L304, C305–F333, S334–L361, C362–L390, A391–L418, and V419–L447. S91 is subject to Phosphoserine.

In terms of assembly, forms high-affinity heterodimers with RNASE1, ANG and RNASE2.

The protein resides in the cytoplasm. Its subcellular location is the nucleus. Ribonuclease inhibitor which inhibits RNASE1, RNASE2 and angiogenin (ANG). May play a role in redox homeostasis. Required to inhibit the cytotoxic tRNA ribonuclease activity of ANG in the cytoplasm in absence of stress. Relocates to the nucleus in response to stress, relieving inhibition of ANG in the cytoplasm, and inhibiting the angiogenic activity of ANG in the nucleus. This Pan troglodytes (Chimpanzee) protein is Ribonuclease inhibitor (RNH1).